The primary structure comprises 123 residues: Small ribosomal subunit protein uS12cz/uS12cy (123 aa).

It belongs to the universal ribosomal protein uS12 family. Part of the 30S ribosomal subunit.

The protein localises to the plastid. It localises to the chloroplast. In terms of biological role, with S4 and S5 plays an important role in translational accuracy. Located at the interface of the 30S and 50S subunits. The chain is Small ribosomal subunit protein uS12cz/uS12cy (rps12-A) from Citrus sinensis (Sweet orange).